The primary structure comprises 259 residues: Isoepoxydon dehydrogenase patN (259 aa).

Positions 69, 96, and 125 each coordinate NADP(+). Residues serine 143 and serine 144 each act as proton donor in the active site. NADP(+)-binding residues include tyrosine 158, lysine 162, and valine 191. Catalysis depends on tyrosine 158, which acts as the Proton acceptor. Lysine 162 acts as the Lowers pKa of active site Tyr in catalysis.

The protein belongs to the short-chain dehydrogenases/reductases (SDR) family.

It localises to the cytoplasm. The protein localises to the cytosol. It catalyses the reaction isoepoxydon + NADP(+) = phyllostine + NADPH + H(+). It participates in mycotoxin biosynthesis; patulin biosynthesis. Functionally, isoepoxydon dehydrogenase; part of the gene cluster that mediates the biosynthesis of patulin, an acetate-derived tetraketide mycotoxin produced by several fungal species that shows antimicrobial properties against several bacteria. PatN catalyzes the conversion of isoepoxydon into phyllostine. The pathway begins with the synthesis of 6-methylsalicylic acid by the polyketide synthase (PKS) patK via condensation of acetate and malonate units. The 6-methylsalicylic acid decarboxylase patG then catalyzes the decarboxylation of 6-methylsalicylic acid to yield m-cresol (also known as 3-methylphenol). These first reactions occur in the cytosol. The intermediate m-cresol is then transported into the endoplasmic reticulum where the cytochrome P450 monooxygenase patH converts it to m-hydroxybenzyl alcohol, which is further converted to gentisyl alcohol by the cytochrome P450 monooxygenase patI. The oxidoreductases patJ and patO further convert gentisyl alcohol to isoepoxydon in the vacuole. PatN catalyzes then the transformation of isoepoxydon into phyllostine. The cluster protein patF is responsible for the conversion from phyllostine to neopatulin whereas the alcohol dehydrogenase patD converts neopatulin to E-ascladiol. The steps between isoepoxydon and E-ascladiol occur in the cytosol, and E-ascladiol is probably secreted to the extracellular space by one of the cluster-specific transporters patC or patM. Finally, the secreted patulin synthase patE catalyzes the conversion of E-ascladiol to patulin. The chain is Isoepoxydon dehydrogenase patN from Penicillium expansum (Blue mold rot fungus).